The sequence spans 152 residues: Sec-independent protein translocase protein TatB (152 aa).

A helical transmembrane segment spans residues 1-21 (MFGISFSELLLVGLVALLVLG). Positions 98–115 (HAPGAATVAEAPPASEVP) are enriched in low complexity. The interval 98–152 (HAPGAATVAEAPPASEVPAPLPSTPAPAPTAEPAAPVATPATTAPHDSTLPPRAP) is disordered. Residues 116 to 127 (APLPSTPAPAPT) are compositionally biased toward pro residues. Residues 128 to 142 (AEPAAPVATPATTAP) are compositionally biased toward low complexity.

The protein belongs to the TatB family. In terms of assembly, the Tat system comprises two distinct complexes: a TatABC complex, containing multiple copies of TatA, TatB and TatC subunits, and a separate TatA complex, containing only TatA subunits. Substrates initially bind to the TatABC complex, which probably triggers association of the separate TatA complex to form the active translocon.

The protein localises to the cell inner membrane. Functionally, part of the twin-arginine translocation (Tat) system that transports large folded proteins containing a characteristic twin-arginine motif in their signal peptide across membranes. Together with TatC, TatB is part of a receptor directly interacting with Tat signal peptides. TatB may form an oligomeric binding site that transiently accommodates folded Tat precursor proteins before their translocation. The polypeptide is Sec-independent protein translocase protein TatB (Pseudomonas fluorescens (strain ATCC BAA-477 / NRRL B-23932 / Pf-5)).